We begin with the raw amino-acid sequence, 62 residues long: Conotoxin Pn-B0151 (62 aa).

An N-terminal signal peptide occupies residues 1–22 (MRCLPVFVILLLLIASTPSVDA). Residues 23–48 (LQKTKDDMPLASFHDNVKRILQTLSN) constitute a propeptide that is removed on maturation.

Belongs to the conotoxin T superfamily. In terms of processing, contains 2 disulfide bonds that can be either 'C1-C3, C2-C4' or 'C1-C4, C2-C3', since these disulfide connectivities have been observed for conotoxins with cysteine framework V (for examples, see AC P0DQQ7 and AC P81755). As to expression, expressed by the venom duct.

It localises to the secreted. In Conus pennaceus (Feathered cone), this protein is Conotoxin Pn-B0151.